A 314-amino-acid polypeptide reads, in one-letter code: Acetyl-coenzyme A carboxylase carboxyl transferase subunit alpha (314 aa).

One can recognise a CoA carboxyltransferase C-terminal domain in the interval 32-289; sequence EIDMLEASLE…KSAFVAQLDS (258 aa).

The protein belongs to the AccA family. As to quaternary structure, acetyl-CoA carboxylase is a heterohexamer composed of biotin carboxyl carrier protein (AccB), biotin carboxylase (AccC) and two subunits each of ACCase subunit alpha (AccA) and ACCase subunit beta (AccD).

It is found in the cytoplasm. It catalyses the reaction N(6)-carboxybiotinyl-L-lysyl-[protein] + acetyl-CoA = N(6)-biotinyl-L-lysyl-[protein] + malonyl-CoA. Its pathway is lipid metabolism; malonyl-CoA biosynthesis; malonyl-CoA from acetyl-CoA: step 1/1. Its function is as follows. Component of the acetyl coenzyme A carboxylase (ACC) complex. First, biotin carboxylase catalyzes the carboxylation of biotin on its carrier protein (BCCP) and then the CO(2) group is transferred by the carboxyltransferase to acetyl-CoA to form malonyl-CoA. This Staphylococcus aureus (strain JH9) protein is Acetyl-coenzyme A carboxylase carboxyl transferase subunit alpha.